The sequence spans 403 residues: Sex hormone-binding globulin (403 aa).

A signal peptide spans 1–30 (MEKGEVASLRCRLLLLLLLLTLPPTHQGRT). Laminin G-like domains are found at residues 46–218 (KYLS…LGNC) and 225–391 (GLFF…THSC). Cysteine 194 and cysteine 218 are joined by a disulfide. Residue asparagine 274 is glycosylated (N-linked (GlcNAc...) asparagine). An intrachain disulfide couples cysteine 363 to cysteine 391. N-linked (GlcNAc...) asparagine glycosylation is present at asparagine 397.

Homodimer. As to expression, isoform 2 is only expressed in the liver.

The protein resides in the secreted. Its function is as follows. Functions as an androgen transport protein, but may also be involved in receptor mediated processes. Each dimer binds one molecule of steroid. Specific for 5-alpha-dihydrotestosterone, testosterone, and 17-beta-estradiol. Regulates the plasma metabolic clearance rate of steroid hormones by controlling their plasma concentration. This Rattus norvegicus (Rat) protein is Sex hormone-binding globulin (Shbg).